We begin with the raw amino-acid sequence, 429 residues long: MESLPQPQNQSSPATTPAKILLGKYELGRRLGSGSFAKVHLARSIESDELVAVKIIEKKKTIESGMEPRIIREIDAMRRLRHHPNILKIHEVMATKSKIYLVMELASGGELFSKVLRRGRLPESTARRYFQQLASALRFSHQDGVAHRDVKPQNLLLDEQGNLKVSDFGLSALPEHLQNGLLHTACGTPAYTAPEVISRRGYDGAKADAWSCGVILFVLLVGDVPFDDSNIAAMYRKIHRRDYRFPSWISKQAKSIIYQMLDPNPVTRMSIETVMKTNWFKKSLETSEFHRNVFDSEVEMKSSVNSITAFDLISLSSGLDLSGLFEAKKKKERRFTAKVSGVEVEEKAKMIGEKLGYVVKKKMMKKEGEVKVVGLGRGRTVIVVEAVELTVDVVVVEVKVVEGEEDDSRWSDLITELEDIVLSWHNDIM.

In terms of domain architecture, Protein kinase spans 25–280; sequence YELGRRLGSG…IETVMKTNWF (256 aa). ATP-binding positions include 31-39 and Lys54; that span reads LGSGSFAKV. The active-site Proton acceptor is the Asp149. Residues 167–195 form an activation loop region; that stretch reads DFGLSALPEHLQNGLLHTACGTPAYTAPE. Ser171 carries the phosphoserine modification. A Phosphothreonine modification is found at Thr184. The NAF domain maps to 302–326; the sequence is SSVNSITAFDLISLSSGLDLSGLFE. The segment at 330–363 is PPI; sequence KKERRFTAKVSGVEVEEKAKMIGEKLGYVVKKKM.

It belongs to the protein kinase superfamily. CAMK Ser/Thr protein kinase family. SNF1 subfamily. Interacts with CBL1, CBL2 and CBL3. It depends on Mn(2+) as a cofactor. Post-translationally, autophosphorylated. Strongly expressed in leaves, but barely expressed in roots, stems or flowers.

The catalysed reaction is L-seryl-[protein] + ATP = O-phospho-L-seryl-[protein] + ADP + H(+). The enzyme catalyses L-threonyl-[protein] + ATP = O-phospho-L-threonyl-[protein] + ADP + H(+). CIPK serine-threonine protein kinases interact with CBL proteins. Binding of a CBL protein to the regulatory NAF domain of CIPK protein lead to the activation of the kinase in a calcium-dependent manner. Phosphorylates the rice sucrose synthase (SuSy) in vitro in an allosteric manner. Involved in cold response. This chain is CBL-interacting serine/threonine-protein kinase 7 (CIPK7), found in Arabidopsis thaliana (Mouse-ear cress).